Here is a 397-residue protein sequence, read N- to C-terminus: Teichoic acid D-alanine hydrolase (397 aa).

Residues 1–27 (MKFNKEKLVIHACVLLFIIISIGLVFH) form the signal peptide.

The protein resides in the cell membrane. The catalysed reaction is [(4-D-Ala)-(2-GlcNAc)-Rib-ol-P]n-[Gro-P]m-beta-D-ManNAc-(1-&gt;4)-alpha-D-GlcNAc-P-peptidoglycan + n H2O = [(2-GlcNAc)-Rib-ol-P]n-[Gro-P]m-beta-D-ManNAc-(1-&gt;4)-alpha-D-GlcNAc-P-peptidoglycan + n D-alanine.. Catalyzes the liberation of D-alanyl moieties present on wall teichoic acid (WTA) and lipoteichoic acid (LTA). Affects the methicillin resistance level and autolysis in the presence of Triton X-100 as well as the cell wall structure. The sequence is that of Teichoic acid D-alanine hydrolase (fmtA) from Staphylococcus aureus (strain MRSA252).